Here is a 203-residue protein sequence, read N- to C-terminus: Auxin-responsive protein IAA4 (203 aa).

The interval 1-31 is disordered; the sequence is MEECKGGGMSPSSSMDSSTHPALSTTSSAAT. Low complexity predominate over residues 10 to 31; sequence SPSSSMDSSTHPALSTTSSAAT. The EAR-like (transcriptional repression) motif lies at 40-44; the sequence is LRLGL. A PB1 domain is found at 108 to 202; that stretch reads TLFVKVYMEG…KKLRIARMDK (95 aa).

This sequence belongs to the Aux/IAA family. As to quaternary structure, homodimers and heterodimers.

The protein resides in the nucleus. Aux/IAA proteins are short-lived transcriptional factors that function as repressors of early auxin response genes at low auxin concentrations. This chain is Auxin-responsive protein IAA4 (IAA4), found in Oryza sativa subsp. japonica (Rice).